We begin with the raw amino-acid sequence, 46 residues long: Protein PsbN (46 aa).

A helical transmembrane segment spans residues 10-30 (VAIAVLAALLGLTGFGVYTAF).

This sequence belongs to the PsbN family.

The protein resides in the cellular thylakoid membrane. Functionally, may play a role in photosystem I and II biogenesis. The polypeptide is Protein PsbN (Synechococcus sp. (strain CC9311)).